A 118-amino-acid chain; its full sequence is Late cornified envelope protein 1B (118 aa).

Residues 87–118 form a disordered region; that stretch reads CHRPQSSGCCSQPSGGSSCCGGGSGQHSGGCC. Positions 90–103 are enriched in low complexity; the sequence is PQSSGCCSQPSGGS. Residues 104 to 118 are compositionally biased toward gly residues; the sequence is SCCGGGSGQHSGGCC.

Belongs to the LCE family. As to quaternary structure, interacts with CYSRT1; the interaction is direct. As to expression, skin-specific. Expression was readily detected in adult trunk skin, adult arm skin, fetal skin, penal skin, vulva, esophagus and tongue. Not expressed in the cervix, rectum, lung, colon, or placenta.

Its function is as follows. Precursors of the cornified envelope of the stratum corneum. The chain is Late cornified envelope protein 1B (LCE1B) from Homo sapiens (Human).